The sequence spans 610 residues: Aspartate--tRNA(Asp/Asn) ligase (610 aa).

Residue Glu177 participates in L-aspartate binding. The segment at 201 to 204 (QLFK) is aspartate. Position 223 (Arg223) interacts with L-aspartate. ATP is bound by residues 223–225 (RDE) and Gln232. His461 contacts L-aspartate. Residue Glu499 coordinates ATP. Arg506 contributes to the L-aspartate binding site. 551–554 (GVDR) lines the ATP pocket.

It belongs to the class-II aminoacyl-tRNA synthetase family. Type 1 subfamily. In terms of assembly, homodimer.

It is found in the cytoplasm. The catalysed reaction is tRNA(Asx) + L-aspartate + ATP = L-aspartyl-tRNA(Asx) + AMP + diphosphate. Its function is as follows. Aspartyl-tRNA synthetase with relaxed tRNA specificity since it is able to aspartylate not only its cognate tRNA(Asp) but also tRNA(Asn). Reaction proceeds in two steps: L-aspartate is first activated by ATP to form Asp-AMP and then transferred to the acceptor end of tRNA(Asp/Asn). The protein is Aspartate--tRNA(Asp/Asn) ligase of Parasynechococcus marenigrum (strain WH8102).